The primary structure comprises 287 residues: Elongation factor Ts (287 aa).

The involved in Mg(2+) ion dislocation from EF-Tu stretch occupies residues 77–80 (TDFV).

Belongs to the EF-Ts family.

It is found in the cytoplasm. In terms of biological role, associates with the EF-Tu.GDP complex and induces the exchange of GDP to GTP. It remains bound to the aminoacyl-tRNA.EF-Tu.GTP complex up to the GTP hydrolysis stage on the ribosome. This Wolbachia sp. subsp. Brugia malayi (strain TRS) protein is Elongation factor Ts.